The chain runs to 56 residues: Large ribosomal subunit protein eL40 (56 aa).

This sequence belongs to the eukaryotic ribosomal protein eL40 family.

The sequence is that of Large ribosomal subunit protein eL40 from Saccharolobus islandicus (strain Y.N.15.51 / Yellowstone #2) (Sulfolobus islandicus).